A 494-amino-acid polypeptide reads, in one-letter code: MKFAKTLERTLEEDEIPQEWVEAAIQYKALKKCINKVVNELEFLGLQKNTLKILLNDKVVEVNEQETNPSNPIIAEYILSKTSTDAHNIKPMLKITLDYSSEDYTKDHIVELGKELKQKIEALLNDSDTEYEEDKIIELKEDDGGDLQIVTSREGSLSPPASRMASPPTSPTLKVVDSLNTNIDEALLSPDDHHKKHEIFIMLNSDSKFFEMLNDELNSLDTLTQQEESKIIEEVKKIAKYVNELKLKQSELYKWRELFKVYLDSEVYFKYNETALPSQQKSSEQIKSNLDLFVTNLNKSGIMTRFKKKQSLETFNQFMEMNYHLLKILQFQTINNEALRKILKKFDKQTSLGIQKTFPKLISNDHIFMSGSSLAQSICYIIQESIIKVIPQLDDYSCPICMNIAYKPIRLSCGHLFCVRCLVKMKQDDKTSCPLCRKENAILYADSSNLDLESMELMKKYFPREVKEKLRERDKERYNELRKNANSGEKCIVM.

The region spanning 1 to 360 (MKFAKTLERT…SLGIQKTFPK (360 aa)) is the SPX domain. The RING-type zinc-finger motif lies at 398 to 437 (CPICMNIAYKPIRLSCGHLFCVRCLVKMKQDDKTSCPLCR).

The protein resides in the nucleus. Its function is as follows. Transcription factor required for yeast cell adherence to silicone substrate. This is Transcriptional regulator of yeast form adherence 3 (TRY3) from Candida albicans (strain SC5314 / ATCC MYA-2876) (Yeast).